Here is a 354-residue protein sequence, read N- to C-terminus: UPF0425 pyridoxal phosphate-dependent protein MMP0002 (354 aa).

Lys-210 carries the post-translational modification N6-(pyridoxal phosphate)lysine.

Belongs to the UPF0425 family. Requires pyridoxal 5'-phosphate as cofactor.

The chain is UPF0425 pyridoxal phosphate-dependent protein MMP0002 from Methanococcus maripaludis (strain DSM 14266 / JCM 13030 / NBRC 101832 / S2 / LL).